A 403-amino-acid chain; its full sequence is Arginine biosynthesis bifunctional protein ArgJ (403 aa).

The substrate site is built by T151, K177, T188, E275, N398, and S403. Catalysis depends on T188, which acts as the Nucleophile.

It belongs to the ArgJ family. As to quaternary structure, heterotetramer of two alpha and two beta chains.

The protein localises to the cytoplasm. The catalysed reaction is N(2)-acetyl-L-ornithine + L-glutamate = N-acetyl-L-glutamate + L-ornithine. The enzyme catalyses L-glutamate + acetyl-CoA = N-acetyl-L-glutamate + CoA + H(+). Its pathway is amino-acid biosynthesis; L-arginine biosynthesis; L-ornithine and N-acetyl-L-glutamate from L-glutamate and N(2)-acetyl-L-ornithine (cyclic): step 1/1. It functions in the pathway amino-acid biosynthesis; L-arginine biosynthesis; N(2)-acetyl-L-ornithine from L-glutamate: step 1/4. Catalyzes two activities which are involved in the cyclic version of arginine biosynthesis: the synthesis of N-acetylglutamate from glutamate and acetyl-CoA as the acetyl donor, and of ornithine by transacetylation between N(2)-acetylornithine and glutamate. In Caulobacter vibrioides (strain ATCC 19089 / CIP 103742 / CB 15) (Caulobacter crescentus), this protein is Arginine biosynthesis bifunctional protein ArgJ.